A 4466-amino-acid chain; its full sequence is Dynein beta chain, ciliary (4466 aa).

Residues 1–1813 are stem; it reads MGDVVDARLD…YANICDAQFK (1813 aa). Residue 154-161 participates in ATP binding; that stretch reads AGQVKGKT. Coiled coils occupy residues 482-502, 627-643, 734-805, 1036-1056, 1306-1337, and 1443-1468; these read QEFL…DRRL, QKYE…EQKV, VLEV…WTKQ, TLDQ…EADE, WLEI…AWDA, and LLKS…MTSK. AAA stretches follow at residues 1814-2035, 2095-2316, 2422-2669, and 2767-3016; these read YSYE…VLVV, KVVK…IRFK, ELDP…VFQG, and TYNE…ERRY. ATP is bound by residues 1852-1859, 2133-2140, 2460-2467, and 2805-2812; these read GPAGTGKT, GNAGTGKS, GNAGLGKS, and GVGGSGKQ. Coiled-coil stretches lie at residues 3033–3134, 3263–3325, and 3573–3642; these read SLLA…AKAE, EPKR…SRTI, and QERP…EEAK. Residues 3033–3325 form a stalk region; the sequence is SLLAMKSKEL…QEAEATSRTI (293 aa). AAA stretches follow at residues 3409–3636 and 3846–4072; these read LTDD…EISV and VRNF…VLYN.

This sequence belongs to the dynein heavy chain family. In terms of assembly, consists of at least two heavy chains (alpha and beta), three intermediate chains and several light chains.

Its subcellular location is the cell projection. It is found in the cilium. The protein localises to the flagellum. The protein resides in the cytoplasm. It localises to the cytoskeleton. Its subcellular location is the flagellum axoneme. Its function is as follows. Force generating protein of eukaryotic cilia and flagella. Produces force towards the minus ends of microtubules. Dynein has ATPase activity; the force-producing power stroke is thought to occur on release of ADP. This is Dynein beta chain, ciliary from Heliocidaris crassispina (Sea urchin).